Reading from the N-terminus, the 394-residue chain is Magnesium transporter MRS2-2 (394 aa).

Residues 115–145 (PVGNASHNGGQGDGKEIAGAQNDGDTGDEDE) are disordered. Transmembrane regions (helical) follow at residues 329–349 (LVLS…GIFG) and 366–386 (YVVG…MSYA). Residues 349 to 351 (GMN) carry the Required for magnesium transport activity motif.

Belongs to the CorA metal ion transporter (MIT) (TC 1.A.35.5) family. In terms of tissue distribution, expressed in the whole plant but preferentially in the mature anthers.

The protein resides in the membrane. Functionally, low-affinity magnesium transporter that mediates the influx of magnesium. Plays a crucial role in male gametophyte development and male fertility. The chain is Magnesium transporter MRS2-2 (MRS2-2) from Arabidopsis thaliana (Mouse-ear cress).